Here is a 300-residue protein sequence, read N- to C-terminus: Cell shape-determining protein MreC (300 aa).

At 1 to 17 the chain is on the cytoplasmic side; that stretch reads MARDRTRPEDFTRPLRR. Residues 18–38 traverse the membrane as a helical segment; sequence ILVGGLVLLLLGIFLIWRIDS. The Periplasmic segment spans residues 39–300; the sequence is PRVEQFRAAL…APAAVEGADG (262 aa). Residues 74–117 are a coiled coil; it reads QSYTRIYEQNQELRRELQQMKAWKEAALQLEQKNARLLDLNQVR. Positions 277–300 are disordered; the sequence is SDPGKLVAEPPAPPAPAAVEGADG.

The protein belongs to the MreC family.

Its subcellular location is the cell inner membrane. In terms of biological role, involved in formation and maintenance of cell shape. The polypeptide is Cell shape-determining protein MreC (Cereibacter sphaeroides (Rhodobacter sphaeroides)).